Reading from the N-terminus, the 443-residue chain is Phosphoglucosamine mutase (443 aa).

Catalysis depends on serine 101, which acts as the Phosphoserine intermediate. Mg(2+) is bound by residues serine 101, aspartate 239, aspartate 241, and aspartate 243. Serine 101 bears the Phosphoserine mark.

It belongs to the phosphohexose mutase family. It depends on Mg(2+) as a cofactor. Activated by phosphorylation.

It carries out the reaction alpha-D-glucosamine 1-phosphate = D-glucosamine 6-phosphate. Functionally, catalyzes the conversion of glucosamine-6-phosphate to glucosamine-1-phosphate. In Francisella tularensis subsp. novicida (strain U112), this protein is Phosphoglucosamine mutase.